We begin with the raw amino-acid sequence, 157 residues long: Cyclic pyranopterin monophosphate synthase (157 aa).

Residues 75–77 (LCH) and 111–112 (ME) contribute to the substrate site. Residue D126 is part of the active site.

This sequence belongs to the MoaC family. As to quaternary structure, homohexamer; trimer of dimers.

The catalysed reaction is (8S)-3',8-cyclo-7,8-dihydroguanosine 5'-triphosphate = cyclic pyranopterin phosphate + diphosphate. Its pathway is cofactor biosynthesis; molybdopterin biosynthesis. In terms of biological role, catalyzes the conversion of (8S)-3',8-cyclo-7,8-dihydroguanosine 5'-triphosphate to cyclic pyranopterin monophosphate (cPMP). The polypeptide is Cyclic pyranopterin monophosphate synthase (Novosphingobium aromaticivorans (strain ATCC 700278 / DSM 12444 / CCUG 56034 / CIP 105152 / NBRC 16084 / F199)).